Reading from the N-terminus, the 113-residue chain is U11-theraphotoxin-Hhn1f (113 aa).

The first 21 residues, 1–21 (MNTVRVTFLLVFVLAVSLGQA), serve as a signal peptide directing secretion. Positions 22–74 (DKDENRMEMQEKTEQGKSYLDFAENLLLQKLEELEAKLLEEDSEESRNSRQKR) are excised as a propeptide. Residues 61 to 83 (EEDSEESRNSRQKRCIGEGVPCD) are disordered. 3 cysteine pairs are disulfide-bonded: C75–C90, C82–C95, and C89–C110.

It belongs to the neurotoxin 14 (magi-1) family. 01 (HNTX-16) subfamily. Expressed by the venom gland.

The protein localises to the secreted. Probable ion channel inhibitor. In Cyriopagopus hainanus (Chinese bird spider), this protein is U11-theraphotoxin-Hhn1f.